A 375-amino-acid chain; its full sequence is Homoserine O-succinyltransferase (375 aa).

An AB hydrolase-1 domain is found at 48–358 (NAVLVCHALS…DAGHDSFLLD (311 aa)). Serine 154 functions as the Nucleophile in the catalytic mechanism. Arginine 224 lines the substrate pocket. Active-site residues include aspartate 319 and histidine 352. Residue aspartate 353 participates in substrate binding.

It belongs to the AB hydrolase superfamily. MetX family. As to quaternary structure, homodimer.

The protein resides in the cytoplasm. The enzyme catalyses L-homoserine + succinyl-CoA = O-succinyl-L-homoserine + CoA. The protein operates within amino-acid biosynthesis; L-methionine biosynthesis via de novo pathway; O-succinyl-L-homoserine from L-homoserine: step 1/1. In terms of biological role, transfers a succinyl group from succinyl-CoA to L-homoserine, forming succinyl-L-homoserine. The protein is Homoserine O-succinyltransferase of Aromatoleum aromaticum (strain DSM 19018 / LMG 30748 / EbN1) (Azoarcus sp. (strain EbN1)).